We begin with the raw amino-acid sequence, 204 residues long: Lymphotoxin-alpha (204 aa).

Positions 1–33 (MTPPGRLYLLRVCSTPPLLLLGLLLALPLEAQG) are cleaved as a signal peptide. The region spanning 62-204 (PAAHLVGDPS…SSVFFGAFAL (143 aa)) is the THD domain. Residue Asn95 is glycosylated (N-linked (GlcNAc...) asparagine). Cys119 and Cys155 are disulfide-bonded.

The protein belongs to the tumor necrosis factor family. As to quaternary structure, homotrimer, and heterotrimer of either two LTB and one LTA subunits or (less prevalent) two LTA and one LTB subunits. Interacts with TNFRSF14.

The protein localises to the secreted. It localises to the membrane. Cytokine that in its homotrimeric form binds to TNFRSF1A/TNFR1, TNFRSF1B/TNFBR and TNFRSF14/HVEM. In its heterotrimeric form with LTB binds to TNFRSF3/LTBR. Lymphotoxin is produced by lymphocytes and is cytotoxic for a wide range of tumor cells in vitro and in vivo. The protein is Lymphotoxin-alpha (LTA) of Bos taurus (Bovine).